The following is a 317-amino-acid chain: 1-phosphatidylinositol phosphodiesterase (317 aa).

The N-terminal stretch at 1–22 is a signal peptide; that stretch reads MYKNYLQRTLVLLLCFILYFFT. Residues 58–196 form the PI-PLC X-box domain; sequence LAALSIPGTH…LKDVRGKILL (139 aa). Histidine 67 serves as the catalytic Proton acceptor. Histidine 115 functions as the Proton donor in the catalytic mechanism.

As to quaternary structure, monomer.

The protein localises to the secreted. It localises to the cytoplasm. It catalyses the reaction a 1,2-diacyl-sn-glycero-3-phospho-(1D-myo-inositol) = 1D-myo-inositol 1,2-cyclic phosphate + a 1,2-diacyl-sn-glycerol. Cleaves glycosylphosphatidylinositol (GPI) and phosphatidylinositol (PI) anchors but not PI phosphates. Important factor in pathogenesis, PI-PLC activity is present only in virulent listeria species. It may participate in the lysis of the phagolysosomal membrane. The sequence is that of 1-phosphatidylinositol phosphodiesterase (plcA) from Listeria monocytogenes serovar 1/2a (strain ATCC BAA-679 / EGD-e).